The sequence spans 384 residues: Galactokinase (384 aa).

Position 35–38 (35–38 (EHTD)) interacts with substrate. Residues serine 69 and 125-131 (GAGLSSS) contribute to the ATP site. Positions 131 and 163 each coordinate Mg(2+). The Proton acceptor role is filled by aspartate 175. Tyrosine 224 is a binding site for substrate.

This sequence belongs to the GHMP kinase family. GalK subfamily.

Its subcellular location is the cytoplasm. The enzyme catalyses alpha-D-galactose + ATP = alpha-D-galactose 1-phosphate + ADP + H(+). Its pathway is carbohydrate metabolism; galactose metabolism. In terms of biological role, catalyzes the transfer of the gamma-phosphate of ATP to D-galactose to form alpha-D-galactose-1-phosphate (Gal-1-P). The protein is Galactokinase of Aliivibrio fischeri (strain MJ11) (Vibrio fischeri).